The sequence spans 221 residues: uncharacterized protein (221 aa).

Helical transmembrane passes span 41–63, 78–100, 141–163, and 178–200; these read TGNI…HSLI, AVMY…SSLS, ILAY…ISFL, and LILR…VNLF.

The protein localises to the cell membrane. This is an uncharacterized protein from Archaeoglobus fulgidus (strain ATCC 49558 / DSM 4304 / JCM 9628 / NBRC 100126 / VC-16).